A 357-amino-acid polypeptide reads, in one-letter code: Carbamoyl phosphate synthase small chain (357 aa).

The segment at 1-168 (MSKRLLILED…STTTAYPSPN (168 aa)) is CPSase. Residues Ser46, Gly220, and Gly222 each contribute to the L-glutamine site. Residues 172–357 (KVVVVDFGLK…FMDLMDNFKK (186 aa)) form the Glutamine amidotransferase type-1 domain. Cys247 acts as the Nucleophile in catalysis. The L-glutamine site is built by Leu248, Gln251, Asn289, Gly291, and Tyr292. Active-site residues include His331 and Asp333.

This sequence belongs to the CarA family. Composed of two chains; the small (or glutamine) chain promotes the hydrolysis of glutamine to ammonia, which is used by the large (or ammonia) chain to synthesize carbamoyl phosphate. Tetramer of heterodimers (alpha,beta)4.

The catalysed reaction is hydrogencarbonate + L-glutamine + 2 ATP + H2O = carbamoyl phosphate + L-glutamate + 2 ADP + phosphate + 2 H(+). It catalyses the reaction L-glutamine + H2O = L-glutamate + NH4(+). Its pathway is amino-acid biosynthesis; L-arginine biosynthesis; carbamoyl phosphate from bicarbonate: step 1/1. It participates in pyrimidine metabolism; UMP biosynthesis via de novo pathway; (S)-dihydroorotate from bicarbonate: step 1/3. Its function is as follows. Small subunit of the glutamine-dependent carbamoyl phosphate synthetase (CPSase). CPSase catalyzes the formation of carbamoyl phosphate from the ammonia moiety of glutamine, carbonate, and phosphate donated by ATP, constituting the first step of 2 biosynthetic pathways, one leading to arginine and/or urea and the other to pyrimidine nucleotides. The small subunit (glutamine amidotransferase) binds and cleaves glutamine to supply the large subunit with the substrate ammonia. This Lactococcus lactis subsp. lactis (strain IL1403) (Streptococcus lactis) protein is Carbamoyl phosphate synthase small chain.